We begin with the raw amino-acid sequence, 743 residues long: Glycerol dehydrogenase large subunit (743 aa).

An N-terminal signal peptide occupies residues Met-1–Ala-24. The segment covering Ala-27–Gly-41 has biased composition (low complexity). Disordered stretches follow at residues Ala-27 to Asp-115 and Ile-445 to Met-474.

It belongs to the bacterial PQQ dehydrogenase family. Requires pyrroloquinoline quinone as cofactor.

It is found in the secreted. The enzyme catalyses glycerol + A = dihydroxyacetone + AH2. Its function is as follows. Catalyzes the oxidation of glycerol to glycerone. Also acts, more slowly, on a number of other polyols including D-sorbitol, D-arabinitol, D-mannitol, meso-erythritol, adonitol and propylene glycol. This Gluconobacter oxydans (strain 621H) (Gluconobacter suboxydans) protein is Glycerol dehydrogenase large subunit (sldA).